The following is a 380-amino-acid chain: Protein trichome birefringence-like 38 (380 aa).

Residues 7–29 traverse the membrane as a helical; Signal-anchor for type II membrane protein segment; it reads SLLLLFLPLLTVTILSGVEQAFA. The GDS motif motif lies at 134 to 136; it reads GDS. The short motif at 357–371 is the DCXHWCLPGXXDXWN motif element; the sequence is DCSHWCLPGLPDTWN.

The protein belongs to the PC-esterase family. TBL subfamily.

It localises to the membrane. Its function is as follows. May act as a bridging protein that binds pectin and other cell wall polysaccharides. Probably involved in maintaining esterification of pectins. May be involved in the specific O-acetylation of cell wall polymers. This is Protein trichome birefringence-like 38 (TBL38) from Arabidopsis thaliana (Mouse-ear cress).